The primary structure comprises 608 residues: 65-kDa microtubule-associated protein 6 (608 aa).

Coiled-coil stretches lie at residues D164–D186, E368–K388, and V467–Q503. Positions L501 to N565 are disordered. The span at S510–P523 shows a compositional bias: low complexity. Residue S513 is modified to Phosphoserine. Residues F526–V535 show a composition bias toward polar residues. Position 604 is a phosphoserine (S604).

The protein belongs to the MAP65/ASE1 family. In terms of assembly, forms a dimer. Binds to polymerized centrally located endocytic MT.

Its subcellular location is the nucleus. The protein resides in the cytoplasm. It is found in the mitochondrion. It localises to the cytoskeleton. The protein localises to the phragmoplast. Its function is as follows. Microtubule-associated protein that mediates the formation of a mesh-like stable and dense network formed by individual microtubules (MT). Confers MT resistance to high concentration of NaCl. This Arabidopsis thaliana (Mouse-ear cress) protein is 65-kDa microtubule-associated protein 6 (MAP65-6).